Here is a 464-residue protein sequence, read N- to C-terminus: MGKRLLDKLWERHVVATNENGLDLLYIDLHLVHEVTSPQAFEGLRLTNRRVRRPDLTFATMDHNIPTKDVWNITDRIAKQQLDTLRENCKQFQVPLADIGDEEQGIVHVIGPELGLTQPGKTIVCGDSHTATHGAFGALAFGIGTSEVEHVLATQTLWQRKPKAMGIELKGKLPQGVYAKDIILHLLSKYGVAVGTGYVMEFYGETIHAMDMEERMTLCNMAIEGGAKAGIIAPDEKTVAYVKGRKYAPKDYESIKKKWSELYTDLDAVYDLHISVDVTDLAPYVTWGTNPSMGVRIDEKLPEKYDANDERAFSYMGLSPGQSTYDIPVQHVFIGSCTNSRLSDLEIAASVVKGKKVKEGVRALVVPGSQRVREAAMHKGLHRIFEEAGFEWREPGCSMCLGMNPDQVPEGEHCASTSNRNFEGRQGKGARTHLVSPAMAAAAALYGHFVDIRKESYDGAISYS.

[4Fe-4S] cluster-binding residues include Cys-337, Cys-397, and Cys-400.

It belongs to the aconitase/IPM isomerase family. LeuC type 1 subfamily. Heterodimer of LeuC and LeuD. [4Fe-4S] cluster serves as cofactor.

It carries out the reaction (2R,3S)-3-isopropylmalate = (2S)-2-isopropylmalate. It participates in amino-acid biosynthesis; L-leucine biosynthesis; L-leucine from 3-methyl-2-oxobutanoate: step 2/4. In terms of biological role, catalyzes the isomerization between 2-isopropylmalate and 3-isopropylmalate, via the formation of 2-isopropylmaleate. The chain is 3-isopropylmalate dehydratase large subunit from Bacillus cereus (strain G9842).